Reading from the N-terminus, the 143-residue chain is Large ribosomal subunit protein uL16 (143 aa).

Positions 1–17 (MLQPKRTKFRKAHKGRI) are enriched in basic residues. The tract at residues 1-21 (MLQPKRTKFRKAHKGRIHGNA) is disordered.

This sequence belongs to the universal ribosomal protein uL16 family. As to quaternary structure, part of the 50S ribosomal subunit.

Its function is as follows. Binds 23S rRNA and is also seen to make contacts with the A and possibly P site tRNAs. This Rhizorhabdus wittichii (strain DSM 6014 / CCUG 31198 / JCM 15750 / NBRC 105917 / EY 4224 / RW1) (Sphingomonas wittichii) protein is Large ribosomal subunit protein uL16.